The following is a 2359-amino-acid chain: Neuron navigator 3 (2359 aa).

One can recognise a Calponin-homology (CH) domain in the interval 77 to 184 (IEDSKIYTDW…LFFSLSRYKQ (108 aa)). Composition is skewed to polar residues over residues 204–226 (THTAPQSEASQAKTQQDMQSSLT), 233–243 (SKHSGIATSQK), 257–279 (ASSSNKAQGASNLNRRSQSFNSI), and 300–317 (QPSSGINGNTQPPSTSGQ). Disordered regions lie at residues 204 to 623 (THTA…QQQH) and 641 to 660 (ENEGTSLPPADSCTSPTKMD). The segment covering 318 to 329 (PPASAIPSPSAS) has biased composition (low complexity). Residues 335 to 352 (KSMNVKHSATSTMLTVKQ) show a composition bias toward polar residues. 2 stretches are compositionally biased toward low complexity: residues 353-363 (PSPATSPTPSS) and 427-439 (NSGLNSGGSTNSS). The span at 465–491 (PKEKEEKTRDKNKACAEKSGKEEKDQV) shows a compositional bias: basic and acidic residues. Positions 522-536 (IPSSSGIPKPGSKVP) are enriched in low complexity. Residues 592-623 (ASPSSSCVMQVTHSSGQSPGNGAVQLPQQQQH) show a composition bias toward polar residues. Residues 680-708 (EARRMRTVKNIADLRQNLEETMSSLRGTQ) are a coiled coil. Disordered regions lie at residues 878-1315 (ADSW…SPLF), 1413-1472 (LSES…AMSS), 1653-1758 (GALN…KPSQ), and 1829-1855 (ETGNTAKPARPPSDSSSTASSSSSRQS). 2 stretches are compositionally biased toward low complexity: residues 883-896 (DSSSVSSGLSDTLD) and 904-916 (NTTSSISSYSNIT). Residues 917-926 (VPSRKNTQLK) are compositionally biased toward polar residues. Positions 943 to 960 (EELKKAEGDCDSHGDGAA) are enriched in basic and acidic residues. Composition is skewed to polar residues over residues 978-989 (QKASLSVSQTGS) and 997-1013 (QGGTPATARQKTSTSAL). Residues 1017-1029 (GKTDDAKASEKGK) show a composition bias toward basic and acidic residues. Composition is skewed to low complexity over residues 1077–1095 (GASTMITSSGATITSGSAT) and 1160–1173 (SSTSSIDSNVSSKS). Residues 1190–1199 (GRSSPVTVNQ) show a composition bias toward polar residues. 3 stretches are compositionally biased toward low complexity: residues 1209 to 1229 (VSDSESVSLSGSPKSSPTSAS), 1256 to 1266 (GAKAGGKSASA), and 1274 to 1285 (SSSVVLSPSTSL). Over residues 1299 to 1308 (GSMGSAGGLS) the composition is skewed to gly residues. A compositionally biased stretch (basic and acidic residues) spans 1439–1448 (NQEEGKEWLR). Residues 1449 to 1461 (SHSTGGLQDTGNQ) show a composition bias toward polar residues. Phosphoserine is present on residues Ser1462 and Ser1466. Residues 1462-1472 (SPLVSPSAMSS) show a composition bias toward low complexity. A coiled-coil region spans residues 1565–1656 (AEEKAHSEQI…AQAAIQGALN (92 aa)). 2 stretches are compositionally biased toward low complexity: residues 1675–1692 (SVSSINSATSHSSIGSGN) and 1749–1758 (SGSSSMKPSQ). The stretch at 1768–1835 (EAEAEIILQL…LKAETGNTAK (68 aa)) forms a coiled coil. A compositionally biased stretch (low complexity) spans 1841–1855 (SDSSSTASSSSSRQS).

The protein belongs to the Nav/unc-53 family. In terms of tissue distribution, present in neurons from central and peripheral nervous systems (at protein level). Highly expressed in brain cortex, midbrain, cerebellum and hippocampus.

It localises to the nucleus outer membrane. Its function is as follows. Plays a role in cell migration. May be involved in neuron regeneration. May regulate IL2 production by T-cells. This Mus musculus (Mouse) protein is Neuron navigator 3 (Nav3).